A 565-amino-acid polypeptide reads, in one-letter code: Periplasmic trehalase (565 aa).

The signal sequence occupies residues 1–30 (MKSPAPSRPQKMALIPACIFLCFAALSVQA). Substrate is bound by residues Arg152, 159–160 (WD), Asn196, 205–207 (RSQ), 277–279 (RPE), and Gly310. Active-site proton donor/acceptor residues include Asp312 and Glu496. Residue Glu511 participates in substrate binding. The tract at residues 538–565 (PCDNVPATRPTVKSATTQPSTKEAQPTP) is disordered. A compositionally biased stretch (polar residues) spans 548 to 565 (TVKSATTQPSTKEAQPTP).

Belongs to the glycosyl hydrolase 37 family. In terms of assembly, monomer.

It is found in the periplasm. The catalysed reaction is alpha,alpha-trehalose + H2O = alpha-D-glucose + beta-D-glucose. Provides the cells with the ability to utilize trehalose at high osmolarity by splitting it into glucose molecules that can subsequently be taken up by the phosphotransferase-mediated uptake system. This is Periplasmic trehalase from Escherichia coli (strain 55989 / EAEC).